Here is a 124-residue protein sequence, read N- to C-terminus: Fluoride-specific ion channel FluC (124 aa).

Transmembrane regions (helical) follow at residues 1–21 (MLNT…RYGV), 36–56 (TMII…WFVV), 70–90 (TGIL…FLLI), and 100–120 (LYVI…FAII). Positions 74 and 77 each coordinate Na(+).

Belongs to the fluoride channel Fluc/FEX (TC 1.A.43) family.

It is found in the cell inner membrane. The catalysed reaction is fluoride(in) = fluoride(out). Na(+) is not transported, but it plays an essential structural role and its presence is essential for fluoride channel function. Fluoride-specific ion channel. Important for reducing fluoride concentration in the cell, thus reducing its toxicity. The protein is Fluoride-specific ion channel FluC of Methylobacterium sp. (strain 4-46).